The chain runs to 117 residues: MLLEKAYRIKKNADFQRIYKKGHSVANRQFVVYTCNNKEIDHFRLGISVSKKLGNAVLRNKIKRAIRENFKVHKSHILAKDIIVIARQPAKDMTTLQIQNSLEHVLKIAKVFNKKSK.

This sequence belongs to the RnpA family. In terms of assembly, consists of a catalytic RNA component (M1 or rnpB) and a protein subunit.

It catalyses the reaction Endonucleolytic cleavage of RNA, removing 5'-extranucleotides from tRNA precursor.. RNaseP catalyzes the removal of the 5'-leader sequence from pre-tRNA to produce the mature 5'-terminus. It can also cleave other RNA substrates such as 4.5S RNA. The protein component plays an auxiliary but essential role in vivo by binding to the 5'-leader sequence and broadening the substrate specificity of the ribozyme. This chain is Ribonuclease P protein component, found in Staphylococcus aureus (strain bovine RF122 / ET3-1).